The following is a 386-amino-acid chain: Tryptophan--tRNA ligase (386 aa).

A 'HIGH' region motif is present at residues 82 to 90; sequence PSGPMHIGH. The 'KMSKS' region motif lies at 253–257; the sequence is KMSAS.

It belongs to the class-I aminoacyl-tRNA synthetase family.

The protein resides in the cytoplasm. The enzyme catalyses tRNA(Trp) + L-tryptophan + ATP = L-tryptophyl-tRNA(Trp) + AMP + diphosphate + H(+). The polypeptide is Tryptophan--tRNA ligase (Pyrococcus horikoshii (strain ATCC 700860 / DSM 12428 / JCM 9974 / NBRC 100139 / OT-3)).